The following is a 959-amino-acid chain: Glycine dehydrogenase (decarboxylating) (959 aa).

At K708 the chain carries N6-(pyridoxal phosphate)lysine.

The protein belongs to the GcvP family. In terms of assembly, the glycine cleavage system is composed of four proteins: P, T, L and H. Requires pyridoxal 5'-phosphate as cofactor.

The catalysed reaction is N(6)-[(R)-lipoyl]-L-lysyl-[glycine-cleavage complex H protein] + glycine + H(+) = N(6)-[(R)-S(8)-aminomethyldihydrolipoyl]-L-lysyl-[glycine-cleavage complex H protein] + CO2. In terms of biological role, the glycine cleavage system catalyzes the degradation of glycine. The P protein binds the alpha-amino group of glycine through its pyridoxal phosphate cofactor; CO(2) is released and the remaining methylamine moiety is then transferred to the lipoamide cofactor of the H protein. This chain is Glycine dehydrogenase (decarboxylating), found in Yersinia enterocolitica serotype O:8 / biotype 1B (strain NCTC 13174 / 8081).